A 184-amino-acid chain; its full sequence is Transposon Tn917 resolvase (184 aa).

Positions 1–134 (MIFGYARVST…SGLKAARVRG (134 aa)) constitute a Resolvase/invertase-type recombinase catalytic domain. S9 acts as the O-(5'-phospho-DNA)-serine intermediate in catalysis. A DNA-binding region (H-T-H motif) is located at residues 161-180 (IRQILDASKLSKTTFYRYLN).

Belongs to the site-specific recombinase resolvase family.

Its function is as follows. Resolvase catalyzes the resolution (a site-specific recombination) of the cointegrated replicon to yield the final transposition products. This Enterococcus faecalis (Streptococcus faecalis) protein is Transposon Tn917 resolvase (tnpR).